The sequence spans 339 residues: Adenylosuccinate synthetase (339 aa).

Residues 12–18 and 42–44 each bind GTP; these read GDEGKGS and GHS. Residue Asp-13 is the Proton acceptor of the active site. The Mg(2+) site is built by Asp-13 and Gly-42. IMP contacts are provided by residues 13–16, 40–43, Thr-127, Arg-141, Gln-179, Thr-194, and Arg-256; these read DEGK and NAGH. The active-site Proton donor is the His-43. 252–258 contacts substrate; it reads TVTGRRR. GTP is bound by residues Arg-258, 284–286, and 324–326; these read MLD and KTG.

The protein belongs to the adenylosuccinate synthetase family. As to quaternary structure, homodimer. Requires Mg(2+) as cofactor.

The protein resides in the cytoplasm. It catalyses the reaction IMP + L-aspartate + GTP = N(6)-(1,2-dicarboxyethyl)-AMP + GDP + phosphate + 2 H(+). It functions in the pathway purine metabolism; AMP biosynthesis via de novo pathway; AMP from IMP: step 1/2. Functionally, plays an important role in the de novo pathway of purine nucleotide biosynthesis. Catalyzes the first committed step in the biosynthesis of AMP from IMP. The protein is Adenylosuccinate synthetase of Thermococcus onnurineus (strain NA1).